The primary structure comprises 67 residues: uncharacterized protein (67 aa).

Transmembrane regions (helical) follow at residues 10 to 32 (NLSH…TAFI) and 44 to 66 (ATLT…MGQW).

It is found in the cell membrane. This is an uncharacterized protein from Archaeoglobus fulgidus (strain ATCC 49558 / DSM 4304 / JCM 9628 / NBRC 100126 / VC-16).